The sequence spans 317 residues: MSGGLDVLQMKEEDVLKFLAAGTHLGGTNMDFQMEHYTYKRKSDGVYIINLKKTWEKLLLAARAIVAIENPADVCVISSRNTGQRAVLKFASATGATTFHGRFTPGTFTNQIQAAFREPRLLIVTDPRADHQPLTEASYVNIPTIAMCNTDSPLRYVDIAIPCNNKGHHSVGLMWWMLSREVLRMRGTISREHPWEVMPDLYFYRDPEEIEKEEQAAAEKAVGKEEFQGEWTAPTADFAQPEVADWSEGVAVPSVPIQQFPAGIEGKSFTEAAAPSKAPAAAEGFAEDWSAQPATEDWSAAPTAQATEWGGASADWS.

N-acetylserine is present on Ser-2. Laminin-binding regions lie at residues 161–180 and 205–229; these read IPCN…MLSR and RDPE…EFQG. [DE]-W-[ST] repeat units follow at residues 230–232 and 245–247; these read EWT and DWS. The laminin-binding stretch occupies residues 242 to 317; that stretch reads EVADWSEGVA…EWGGASADWS (76 aa). Residues 271–284 show a composition bias toward low complexity; sequence EAAAPSKAPAAAEG. A disordered region spans residues 271 to 317; that stretch reads EAAAPSKAPAAAEGFAEDWSAQPATEDWSAAPTAQATEWGGASADWS. [DE]-W-[ST] repeat units follow at residues 288-290, 297-299, and 315-317; these read DWS.

It belongs to the universal ribosomal protein uS2 family. As to quaternary structure, monomer (37LRP) and homodimer (67LR). Component of the small ribosomal subunit. Mature ribosomes consist of a small (40S) and a large (60S) subunit. The 40S subunit contains about 33 different proteins and 1 molecule of RNA (18S). The 60S subunit contains about 49 different proteins and 3 molecules of RNA (28S, 5.8S and 5S). Interacts with rps21. Interacts with several laminins including at least lamb1. Interacts with mdk. Acylated. Acylation may be a prerequisite for conversion of the monomeric 37 kDa laminin receptor precursor (37LRP) to the mature dimeric 67 kDa laminin receptor (67LR), and may provide a mechanism for membrane association. In terms of processing, cleaved by stromelysin-3 (ST3) at the cell surface. Cleavage by stromelysin-3 may be a mechanism to alter cell-extracellular matrix interactions.

It is found in the cell membrane. The protein resides in the cytoplasm. It localises to the nucleus. Required for the assembly and/or stability of the 40S ribosomal subunit. Required for the processing of the 20S rRNA-precursor to mature 18S rRNA in a late step of the maturation of 40S ribosomal subunits. Also functions as a cell surface receptor for laminin. Plays a role in cell adhesion to the basement membrane and in the consequent activation of signaling transduction pathways. May play a role in cell fate determination and tissue morphogenesis. This chain is Small ribosomal subunit protein uS2 (rpsa), found in Salmo salar (Atlantic salmon).